The sequence spans 417 residues: 4-hydroxy-3-methylbut-2-en-1-yl diphosphate synthase (flavodoxin) (417 aa).

4 residues coordinate [4Fe-4S] cluster: cysteine 303, cysteine 306, cysteine 349, and glutamate 356.

The protein belongs to the IspG family. Requires [4Fe-4S] cluster as cofactor.

The enzyme catalyses (2E)-4-hydroxy-3-methylbut-2-enyl diphosphate + oxidized [flavodoxin] + H2O + 2 H(+) = 2-C-methyl-D-erythritol 2,4-cyclic diphosphate + reduced [flavodoxin]. The protein operates within isoprenoid biosynthesis; isopentenyl diphosphate biosynthesis via DXP pathway; isopentenyl diphosphate from 1-deoxy-D-xylulose 5-phosphate: step 5/6. Converts 2C-methyl-D-erythritol 2,4-cyclodiphosphate (ME-2,4cPP) into 1-hydroxy-2-methyl-2-(E)-butenyl 4-diphosphate. The sequence is that of 4-hydroxy-3-methylbut-2-en-1-yl diphosphate synthase (flavodoxin) from Mesorhizobium japonicum (strain LMG 29417 / CECT 9101 / MAFF 303099) (Mesorhizobium loti (strain MAFF 303099)).